The chain runs to 334 residues: Protein-methionine-sulfoxide reductase catalytic subunit MsrP (334 aa).

Positions 1 to 44 (MKKNQFLKESDVTAESVFFMKRRQVLKALGISATALSLPHAAHA) form a signal peptide, tat-type signal. Mo-molybdopterin-binding positions include Asn88, 91–92 (YE), Cys146, Thr181, Asn233, Arg238, and 249–251 (GIK).

It belongs to the MsrP family. As to quaternary structure, heterodimer of a catalytic subunit (MsrP) and a heme-binding subunit (MsrQ). It depends on Mo-molybdopterin as a cofactor. Post-translationally, predicted to be exported by the Tat system. The position of the signal peptide cleavage has not been experimentally proven.

Its subcellular location is the periplasm. The enzyme catalyses L-methionyl-[protein] + a quinone + H2O = L-methionyl-(S)-S-oxide-[protein] + a quinol. It catalyses the reaction L-methionyl-[protein] + a quinone + H2O = L-methionyl-(R)-S-oxide-[protein] + a quinol. Functionally, part of the MsrPQ system that repairs oxidized periplasmic proteins containing methionine sulfoxide residues (Met-O), using respiratory chain electrons. Thus protects these proteins from oxidative-stress damage caused by reactive species of oxygen and chlorine generated by the host defense mechanisms. MsrPQ is essential for the maintenance of envelope integrity under bleach stress, rescuing a wide series of structurally unrelated periplasmic proteins from methionine oxidation, including the primary periplasmic chaperone SurA and the lipoprotein Pal. The catalytic subunit MsrP is non-stereospecific, being able to reduce both (R-) and (S-) diastereoisomers of methionine sulfoxide. This is Protein-methionine-sulfoxide reductase catalytic subunit MsrP from Escherichia coli (strain K12 / MC4100 / BW2952).